Here is a 290-residue protein sequence, read N- to C-terminus: Dual-specificity RNA pseudouridine synthase RluF (290 aa).

In terms of domain architecture, S4 RNA-binding spans 7–74 (VRLNKYISES…EDLVLIALNK (68 aa)). 2 interaction with RNA regions span residues 105 to 108 (RLDK) and 187 to 190 (RQIR). D107 (nucleophile) is an active-site residue. Residues 241 to 290 (SEAKPKAKAKPKTVGIKRPVVKMEKTAEKGGRPASNGKRFTSPGRKKKGR) are disordered. The segment covering 261–271 (VKMEKTAEKGG) has biased composition (basic and acidic residues).

The protein belongs to the pseudouridine synthase RsuA family. In terms of assembly, monomer.

The catalysed reaction is uridine(2604) in 23S rRNA = pseudouridine(2604) in 23S rRNA. It catalyses the reaction uridine(35) in tRNA(Tyr) = pseudouridine(35) in tRNA(Tyr). Functionally, dual specificity enzyme that catalyzes the synthesis of pseudouridine from uracil-2604 in 23S ribosomal RNA and from uracil-35 in the anticodon of tRNA(Tyr). The protein is Dual-specificity RNA pseudouridine synthase RluF (rluF) of Escherichia coli O6:H1 (strain CFT073 / ATCC 700928 / UPEC).